The sequence spans 203 residues: bMERB domain-containing protein 1 (203 aa).

Positions 3–149 (LKQSLSVHLE…EQEEDKEMAD (147 aa)) constitute a bMERB domain. Residues 160–186 (KVTKSSASSRAEKKAEPPPSKPTVAKT) are disordered.

This is bMERB domain-containing protein 1 (Bmerb1) from Rattus norvegicus (Rat).